Reading from the N-terminus, the 957-residue chain is Melanoma-associated antigen E1 (957 aa).

The tract at residues 1 to 455 (MSLVSQNSRR…DSEGPKGAEG (455 aa)) is disordered. 2 stretches are compositionally biased toward polar residues: residues 85–96 (SEASSASGQPTI) and 104–130 (VLPT…SVTL). A compositionally biased stretch (low complexity) spans 138–162 (TSRPPTSSEEPSTSVPPTASEVPST). Polar residues-rich tracts occupy residues 219–244 (GLST…TEGL), 268–320 (PSTS…STSV), 329–344 (STSV…STSV), 364–380 (LSTS…DTSV), and 414–428 (TLFS…NPSK). MAGE domains are found at residues 491–690 (MEQN…YNEA) and 745–936 (LESK…YREA). Residues 743-957 (SRLESKARKL…HRQIFVHNFR (215 aa)) are interaction with DTNA.

In terms of assembly, interacts with DTNA. Interacts with TRIM28.

Its subcellular location is the cytoplasm. It localises to the perinuclear region. The protein localises to the nucleus. It is found in the cell membrane. Its function is as follows. May enhance ubiquitin ligase activity of RING-type zinc finger-containing E3 ubiquitin-protein ligases. Proposed to act through recruitment and/or stabilization of the Ubl-conjugating enzyme (E2) at the E3:substrate complex. The chain is Melanoma-associated antigen E1 (MAGEE1) from Homo sapiens (Human).